We begin with the raw amino-acid sequence, 447 residues long: NADH-ubiquinone oxidoreductase chain 4 (447 aa).

13 helical membrane passes run 28–48 (IFLATCLFMIKISSNYYFCDI), 56–76 (MISYGLILLSFWICGLMLMAS), 85–105 (YVNLFLFMIVFLLLMLIFTFS), 110–130 (FMFYLFFESSLIPTLFLILGW), 141–161 (IYLLFYTLLASLPLLIGIFYI), 183–203 (FLYLCMIFAFLVKMPMFLVHL), 213–233 (PVSGSMILAGVLLKLGGYGLL), 246–266 (FNYIWISISLIGGVLVSLICL), 273–293 (ALIAYSSVAHMGIVLSGLMTM), 301–321 (SYTLMIAHGLCSSGLFCLANI), 343–365 (SLSLWWFLLCSGNMAAPPTLNLL), 380–400 (LTMISLAFLSFFSAAYTLYLF), and 409–431 (YSGVYFFSSGTTREFLVLMLHWL).

The protein belongs to the complex I subunit 4 family.

It is found in the mitochondrion membrane. It carries out the reaction a ubiquinone + NADH + 5 H(+)(in) = a ubiquinol + NAD(+) + 4 H(+)(out). Core subunit of the mitochondrial membrane respiratory chain NADH dehydrogenase (Complex I) that is believed to belong to the minimal assembly required for catalysis. Complex I functions in the transfer of electrons from NADH to the respiratory chain. The immediate electron acceptor for the enzyme is believed to be ubiquinone. In Aedes aegypti (Yellowfever mosquito), this protein is NADH-ubiquinone oxidoreductase chain 4.